The following is a 244-amino-acid chain: Phosphoadenosine 5'-phosphosulfate reductase (244 aa).

Residue cysteine 239 is the Nucleophile; cysteine thiosulfonate intermediate of the active site.

The protein belongs to the PAPS reductase family. CysH subfamily.

The protein resides in the cytoplasm. The catalysed reaction is [thioredoxin]-disulfide + sulfite + adenosine 3',5'-bisphosphate + 2 H(+) = [thioredoxin]-dithiol + 3'-phosphoadenylyl sulfate. It participates in sulfur metabolism; hydrogen sulfide biosynthesis; sulfite from sulfate: step 3/3. Functionally, catalyzes the formation of sulfite from phosphoadenosine 5'-phosphosulfate (PAPS) using thioredoxin as an electron donor. The polypeptide is Phosphoadenosine 5'-phosphosulfate reductase (Escherichia coli O81 (strain ED1a)).